We begin with the raw amino-acid sequence, 148 residues long: Aspartate carbamoyltransferase regulatory chain (148 aa).

4 residues coordinate Zn(2+): cysteine 106, cysteine 111, cysteine 134, and cysteine 137.

Belongs to the PyrI family. Contains catalytic and regulatory chains. It depends on Zn(2+) as a cofactor.

Functionally, involved in allosteric regulation of aspartate carbamoyltransferase. The sequence is that of Aspartate carbamoyltransferase regulatory chain from Methanococcus vannielii (strain ATCC 35089 / DSM 1224 / JCM 13029 / OCM 148 / SB).